A 370-amino-acid chain; its full sequence is Small ribosomal subunit biogenesis GTPase RsgA (370 aa).

The region spanning 97–255 (QTQLDRPPIA…LADTPGFNQP (159 aa)) is the CP-type G domain. GTP is bound by residues 146-149 (NKSD) and 197-205 (GPSGVGKSS). Positions 280, 285, 287, and 293 each coordinate Zn(2+). The segment at 328-370 (TLKLKTKGKGQSQYEPKLESKKYRRTSRRTQVQGLQDLYQEEE) is disordered.

The protein belongs to the TRAFAC class YlqF/YawG GTPase family. RsgA subfamily. Monomer. Associates with 30S ribosomal subunit, binds 16S rRNA. It depends on Zn(2+) as a cofactor.

The protein resides in the cytoplasm. Its function is as follows. One of several proteins that assist in the late maturation steps of the functional core of the 30S ribosomal subunit. Helps release RbfA from mature subunits. May play a role in the assembly of ribosomal proteins into the subunit. Circularly permuted GTPase that catalyzes slow GTP hydrolysis, GTPase activity is stimulated by the 30S ribosomal subunit. The sequence is that of Small ribosomal subunit biogenesis GTPase RsgA from Trichormus variabilis (strain ATCC 29413 / PCC 7937) (Anabaena variabilis).